The primary structure comprises 215 residues: 3-demethoxyubiquinol 3-hydroxylase (215 aa).

The Fe cation site is built by Glu-64, Glu-94, His-97, Glu-146, Glu-178, and His-181.

Belongs to the COQ7 family. Fe cation is required as a cofactor.

The protein resides in the cell membrane. It catalyses the reaction a 5-methoxy-2-methyl-3-(all-trans-polyprenyl)benzene-1,4-diol + AH2 + O2 = a 3-demethylubiquinol + A + H2O. It functions in the pathway cofactor biosynthesis; ubiquinone biosynthesis. Functionally, catalyzes the hydroxylation of 2-nonaprenyl-3-methyl-6-methoxy-1,4-benzoquinol during ubiquinone biosynthesis. This Pseudomonas fluorescens (strain ATCC BAA-477 / NRRL B-23932 / Pf-5) protein is 3-demethoxyubiquinol 3-hydroxylase.